Consider the following 905-residue polypeptide: uncharacterized protein (905 aa).

WD repeat units lie at residues 42-82 (RSLK…FQAV), 86-128 (GYAR…SDPK), 136-175 (STLD…DSVS), and 177-217 (VNTQ…SDNY). Phosphoserine is present on residues serine 394 and serine 397.

The protein belongs to the WD repeat mio family.

This is an uncharacterized protein from Schizosaccharomyces pombe (strain 972 / ATCC 24843) (Fission yeast).